A 388-amino-acid chain; its full sequence is Succinate--CoA ligase [ADP-forming] subunit beta (388 aa).

The 236-residue stretch at 9–244 (KQLFARYGLP…QSQEDPREAQ (236 aa)) folds into the ATP-grasp domain. ATP-binding positions include K46, 53 to 55 (GRG), E99, T102, and E107. The Mg(2+) site is built by N199 and D213. Substrate is bound by residues N264 and 321 to 323 (GIV).

Belongs to the succinate/malate CoA ligase beta subunit family. In terms of assembly, heterotetramer of two alpha and two beta subunits. Requires Mg(2+) as cofactor.

It catalyses the reaction succinate + ATP + CoA = succinyl-CoA + ADP + phosphate. It carries out the reaction GTP + succinate + CoA = succinyl-CoA + GDP + phosphate. Its pathway is carbohydrate metabolism; tricarboxylic acid cycle; succinate from succinyl-CoA (ligase route): step 1/1. Its function is as follows. Succinyl-CoA synthetase functions in the citric acid cycle (TCA), coupling the hydrolysis of succinyl-CoA to the synthesis of either ATP or GTP and thus represents the only step of substrate-level phosphorylation in the TCA. The beta subunit provides nucleotide specificity of the enzyme and binds the substrate succinate, while the binding sites for coenzyme A and phosphate are found in the alpha subunit. The polypeptide is Succinate--CoA ligase [ADP-forming] subunit beta (Klebsiella pneumoniae (strain 342)).